The primary structure comprises 90 residues: MNKTDLINAVAEQAELSKKDASKAVDAVFESITGALKEGGKVQLVGFGSFEVRERSARKGRNPQTGEEIEIPATKNPAFKPGKQLKDAVN.

Phosphothreonine is present on Thr4. The tract at residues 55-90 is disordered; that stretch reads RSARKGRNPQTGEEIEIPATKNPAFKPGKQLKDAVN.

Belongs to the bacterial histone-like protein family. Homodimer.

Its function is as follows. Histone-like DNA-binding protein which is capable of wrapping DNA to stabilize it, and thus to prevent its denaturation under extreme environmental conditions. In Halalkalibacterium halodurans (strain ATCC BAA-125 / DSM 18197 / FERM 7344 / JCM 9153 / C-125) (Bacillus halodurans), this protein is DNA-binding protein HU-1 (hup1).